A 276-amino-acid chain; its full sequence is Ribosomal RNA small subunit methyltransferase A (276 aa).

Residues Asn-27, Leu-29, Gly-54, Glu-75, Asp-101, and Asn-123 each contribute to the S-adenosyl-L-methionine site.

Belongs to the class I-like SAM-binding methyltransferase superfamily. rRNA adenine N(6)-methyltransferase family. RsmA subfamily.

It is found in the cytoplasm. The enzyme catalyses adenosine(1518)/adenosine(1519) in 16S rRNA + 4 S-adenosyl-L-methionine = N(6)-dimethyladenosine(1518)/N(6)-dimethyladenosine(1519) in 16S rRNA + 4 S-adenosyl-L-homocysteine + 4 H(+). Specifically dimethylates two adjacent adenosines (A1518 and A1519) in the loop of a conserved hairpin near the 3'-end of 16S rRNA in the 30S particle. May play a critical role in biogenesis of 30S subunits. The protein is Ribosomal RNA small subunit methyltransferase A of Bartonella quintana (strain Toulouse) (Rochalimaea quintana).